The following is a 1172-amino-acid chain: Serine/threonine-protein kinase Nek10 (1172 aa).

Residues 209 to 251 form an ARM repeat; the sequence is GAHKTLVNLLGARDTNVLLGSLLALASLAESQECREKISELNI. The stretch at 481 to 514 forms a coiled coil; it reads YEELVSKLNLLVEDELKQIAENIESINQNKAPLK. Positions 519–712 constitute a Protein kinase domain; it reads YAILDHLGSG…SEPYGEKADV (194 aa). Residues 525–533 and Lys548 each bind ATP; that span reads LGSGAFGCV. Asp655 (proton acceptor) is an active-site residue. Disordered stretches follow at residues 855 to 875 and 898 to 954; these read SELS…YGKD and TYSE…GSRP. The span at 919-945 shows a compositional bias: polar residues; that stretch reads PLKESTFNILKRSFSASGGERQSQTRD.

Belongs to the protein kinase superfamily. NEK Ser/Thr protein kinase family. NIMA subfamily. As to quaternary structure, interacts with RAF1 and MAP2K1; the interaction is direct with RAF1 and required for ERK1/2-signaling pathway activation in response to UV irradiation. Mg(2+) is required as a cofactor. In terms of tissue distribution, expressed in the lung.

It carries out the reaction L-seryl-[protein] + ATP = O-phospho-L-seryl-[protein] + ADP + H(+). It catalyses the reaction L-threonyl-[protein] + ATP = O-phospho-L-threonyl-[protein] + ADP + H(+). Plays a role in the cellular response to UV irradiation. Mediates G2/M cell cycle arrest, MEK autoactivation and ERK1/2-signaling pathway activation in response to UV irradiation. In ciliated cells of airways, it is involved in the regulation of mucociliary transport. This chain is Serine/threonine-protein kinase Nek10, found in Homo sapiens (Human).